A 179-amino-acid polypeptide reads, in one-letter code: ATP synthase subunit b (179 aa).

A helical transmembrane segment spans residues 26-46; the sequence is FLEANLFNLAILLGIIIYYAP.

It belongs to the ATPase B chain family. F-type ATPases have 2 components, F(1) - the catalytic core - and F(0) - the membrane proton channel. F(1) has five subunits: alpha(3), beta(3), gamma(1), delta(1), epsilon(1). F(0) has four main subunits: a(1), b(1), b'(1) and c(10-14). The alpha and beta chains form an alternating ring which encloses part of the gamma chain. F(1) is attached to F(0) by a central stalk formed by the gamma and epsilon chains, while a peripheral stalk is formed by the delta, b and b' chains.

It localises to the cellular thylakoid membrane. Its function is as follows. F(1)F(0) ATP synthase produces ATP from ADP in the presence of a proton or sodium gradient. F-type ATPases consist of two structural domains, F(1) containing the extramembraneous catalytic core and F(0) containing the membrane proton channel, linked together by a central stalk and a peripheral stalk. During catalysis, ATP synthesis in the catalytic domain of F(1) is coupled via a rotary mechanism of the central stalk subunits to proton translocation. In terms of biological role, component of the F(0) channel, it forms part of the peripheral stalk, linking F(1) to F(0). This chain is ATP synthase subunit b, found in Synechocystis sp. (strain ATCC 27184 / PCC 6803 / Kazusa).